The sequence spans 184 residues: CKLF-like MARVEL transmembrane domain-containing protein 3 (184 aa).

The span at 1–12 shows a compositional bias: acidic residues; the sequence is MWPPDAEPEPDP. Residues 1–22 are disordered; sequence MWPPDAEPEPDPESAHGPRSGR. One can recognise an MARVEL domain in the interval 36-155; sequence FLCSLKGRLL…DFYLIFNEVA (120 aa). Helical transmembrane passes span 64–84, 96–116, and 131–151; these read ASAF…FLFA, LCWP…YFVI, and AAGV…YLIF. A disordered region spans residues 163 to 184; the sequence is SGNETTAHRTEEENSNSDSDSD. Over residues 175-184 the composition is skewed to acidic residues; it reads ENSNSDSDSD.

The protein belongs to the chemokine-like factor family.

It localises to the membrane. In Mus musculus (Mouse), this protein is CKLF-like MARVEL transmembrane domain-containing protein 3 (Cmtm3).